A 329-amino-acid polypeptide reads, in one-letter code: Ribosomal protein L11 methyltransferase (329 aa).

Residues threonine 177, glycine 198, aspartate 220, and asparagine 264 each contribute to the S-adenosyl-L-methionine site.

The protein belongs to the methyltransferase superfamily. PrmA family.

It is found in the cytoplasm. It catalyses the reaction L-lysyl-[protein] + 3 S-adenosyl-L-methionine = N(6),N(6),N(6)-trimethyl-L-lysyl-[protein] + 3 S-adenosyl-L-homocysteine + 3 H(+). In terms of biological role, methylates ribosomal protein L11. The protein is Ribosomal protein L11 methyltransferase of Helicobacter pylori (strain Shi470).